The primary structure comprises 1258 residues: Ice nucleation protein (1258 aa).

The tract at residues 162–1217 (ATYGSTLSGT…LTAGENSVLI (1056 aa)) is octapeptide periodicity. Disordered stretches follow at residues 260–287 (YGST…KGSD), 311–342 (TQTA…GYGS), 356–383 (YGST…KGSD), 407–438 (TQTA…GYGS), and 452–480 (YGST…GSDL). 5 stretches are compositionally biased toward polar residues: residues 261–286 (GSTQ…QKGS), 311–334 (TQTA…QKGS), 357–382 (GSTQ…QKGS), 407–430 (TQTA…QKGS), and 453–480 (GSTQ…GSDL).

Belongs to the bacterial ice nucleation protein family.

It is found in the cell outer membrane. Ice nucleation proteins enable bacteria to nucleate crystallization in supercooled water. This Enterobacter agglomerans (Erwinia herbicola) protein is Ice nucleation protein (iceE).